Here is a 166-residue protein sequence, read N- to C-terminus: Interferon gamma (166 aa).

Positions 1–23 (MSYTTYFLAFQLCVTLCFSGSYC) are cleaved as a signal peptide. Glutamine 24 carries the pyrrolidone carboxylic acid modification. N-linked (GlcNAc...) asparagine glycosylation is found at asparagine 39 and asparagine 106.

Belongs to the type II (or gamma) interferon family. In terms of assembly, homodimer. Interacts with IFNGR1 (via extracellular domain); this interaction promotes IFNGR1 dimerization. Released primarily from activated T lymphocytes.

It localises to the secreted. In terms of biological role, type II interferon produced by immune cells such as T-cells and NK cells that plays crucial roles in antimicrobial, antiviral, and antitumor responses by activating effector immune cells and enhancing antigen presentation. Primarily signals through the JAK-STAT pathway after interaction with its receptor IFNGR1 to affect gene regulation. Upon IFNG binding, IFNGR1 intracellular domain opens out to allow association of downstream signaling components JAK2, JAK1 and STAT1, leading to STAT1 activation, nuclear translocation and transcription of IFNG-regulated genes. Many of the induced genes are transcription factors such as IRF1 that are able to further drive regulation of a next wave of transcription. Plays a role in class I antigen presentation pathway by inducing a replacement of catalytic proteasome subunits with immunoproteasome subunits. In turn, increases the quantity, quality, and repertoire of peptides for class I MHC loading. Increases the efficiency of peptide generation also by inducing the expression of activator PA28 that associates with the proteasome and alters its proteolytic cleavage preference. Up-regulates as well MHC II complexes on the cell surface by promoting expression of several key molecules such as cathepsins B/CTSB, H/CTSH, and L/CTSL. Participates in the regulation of hematopoietic stem cells during development and under homeostatic conditions by affecting their development, quiescence, and differentiation. This chain is Interferon gamma (IFNG), found in Sus scrofa (Pig).